We begin with the raw amino-acid sequence, 294 residues long: Protease HtpX homolog 2 (294 aa).

Transmembrane regions (helical) follow at residues 15–35 and 37–57; these read MLFT…FLSY and GTPP…QYFY. Histidine 140 contributes to the Zn(2+) binding site. Glutamate 141 is a catalytic residue. Residue histidine 144 coordinates Zn(2+). 2 helical membrane-spanning segments follow: residues 151-171 and 185-205; these read AVLT…RYSL and GGIL…FLLI. Position 213 (glutamate 213) interacts with Zn(2+).

It belongs to the peptidase M48B family. Requires Zn(2+) as cofactor.

It localises to the cell membrane. This chain is Protease HtpX homolog 2, found in Methanosarcina acetivorans (strain ATCC 35395 / DSM 2834 / JCM 12185 / C2A).